A 442-amino-acid chain; its full sequence is Lipoyl synthase, apicoplast (442 aa).

Residues 1–23 (MRVLTPSLYIYAFFIFCVRFKCG) form the signal peptide. Positions 104-154 (LGEHQLKGKRKESATNVEKEKKEKEQQEERLPVPKVGNKMPEKKPDWFHVP) are disordered. A compositionally biased stretch (basic and acidic residues) spans 114 to 135 (KESATNVEKEKKEKEQQEERLP). Residues Cys177, Cys182, Cys188, Cys203, Cys207, Cys210, and Ser418 each coordinate [4Fe-4S] cluster. The Radical SAM core domain occupies 189–407 (WNIGTATIML…KEEGMKMGFK (219 aa)).

This sequence belongs to the radical SAM superfamily. Lipoyl synthase family. It depends on [4Fe-4S] cluster as a cofactor.

The protein resides in the plastid. The protein localises to the apicoplast. It catalyses the reaction [[Fe-S] cluster scaffold protein carrying a second [4Fe-4S](2+) cluster] + N(6)-octanoyl-L-lysyl-[protein] + 2 oxidized [2Fe-2S]-[ferredoxin] + 2 S-adenosyl-L-methionine + 4 H(+) = [[Fe-S] cluster scaffold protein] + N(6)-[(R)-dihydrolipoyl]-L-lysyl-[protein] + 4 Fe(3+) + 2 hydrogen sulfide + 2 5'-deoxyadenosine + 2 L-methionine + 2 reduced [2Fe-2S]-[ferredoxin]. The protein operates within protein modification; protein lipoylation via endogenous pathway; protein N(6)-(lipoyl)lysine from octanoyl-[acyl-carrier-protein]: step 2/2. Catalyzes the radical-mediated insertion of two sulfur atoms into the C-6 and C-8 positions of the octanoyl moiety bound to the lipoyl domains of lipoate-dependent enzymes, thereby converting the octanoylated domains into lipoylated derivatives. This chain is Lipoyl synthase, apicoplast, found in Plasmodium knowlesi (strain H).